We begin with the raw amino-acid sequence, 64 residues long: Translational regulator CsrA (64 aa).

Belongs to the CsrA/RsmA family. In terms of assembly, homodimer; the beta-strands of each monomer intercalate to form a hydrophobic core, while the alpha-helices form wings that extend away from the core.

It is found in the cytoplasm. Its function is as follows. A key translational regulator that binds mRNA to regulate translation initiation and/or mRNA stability. Mediates global changes in gene expression, shifting from rapid growth to stress survival by linking envelope stress, the stringent response and the catabolite repression systems. Usually binds in the 5'-UTR; binding at or near the Shine-Dalgarno sequence prevents ribosome-binding, repressing translation, binding elsewhere in the 5'-UTR can activate translation and/or stabilize the mRNA. Its function is antagonized by small RNA(s). This Actinobacillus pleuropneumoniae serotype 5b (strain L20) protein is Translational regulator CsrA.